The chain runs to 353 residues: Phosphate acyltransferase (353 aa).

This sequence belongs to the PlsX family. In terms of assembly, homodimer. Probably interacts with PlsY.

The protein resides in the cytoplasm. It catalyses the reaction a fatty acyl-[ACP] + phosphate = an acyl phosphate + holo-[ACP]. It participates in lipid metabolism; phospholipid metabolism. Its function is as follows. Catalyzes the reversible formation of acyl-phosphate (acyl-PO(4)) from acyl-[acyl-carrier-protein] (acyl-ACP). This enzyme utilizes acyl-ACP as fatty acyl donor, but not acyl-CoA. The polypeptide is Phosphate acyltransferase (Rhodopseudomonas palustris (strain HaA2)).